A 977-amino-acid chain; its full sequence is MAQFYYKRNVNAPYRDRIPLRIVRAESELSPSEKAYLNAVEKGDYASVKKSLEEAEIYFKININCIDPLGRTALLIAIENENLELIELLLSFNVYVGDALLHAIRKEVVGAVELLLNHKKPSGEKQVPPILLDKQFSEFTPDITPIILAAHTNNYEIIKLLVQKGVSVPRPHEVRCNCVECVSSSDVDSLRHSRSRLNIYKALASPSLIALSSEDPFLTAFQLSWELQELSKVENEFKSEYEELSRQCKQFAKDLLDQTRSSRELEIILNYRDDNSLIEEQSGNDLARLKLAIKYRQKEFVAQPNCQQLLASRWYDEFPGWRRRHWAVKMVTCFIIGLLFPVFSVCYLIAPKSPLGLFIRKPFIKFICHTASYLTFLFLLLLASQHIDRSDLNRQGPPPTIVEWMILPWVLGFIWGEIKQMWDGGLQDYIHDWWNLMDFVMNSLYLATISLKIVAFVKYSALNPRESWDMWHPTLVAEALFAIANIFSSLRLISLFTANSHLGPLQISLGRMLLDILKFLFIYCLVLLAFANGLNQLYFYYEETKGLSCKGIRCEKQNNAFSTLFETLQSLFWSIFGLINLYVTNVKAQHEFTDFVGATMFGTYNVISLVVLLNMLIAMMNNSYQLIADHADIEWKFARTKLWMSYFEEGGTLPTPFNVIPSPKSLWYLVKWIWTHLCKKKMRRKPESFGTIGRRAADNLRRHHQYQEVMRNLVKRYVAAMIREAKTEEGLTEENVKELKQDISSFRFEVLGLLRGSKLSTIQSANAASSASSADSDEKSHSEGNGKDKRKNLSLFDLTTLIHPRSAVIASERHNLSNGSALVVQEPPREKQRKVNFVADIKNFGLFHRRSKQNAAEQNANQIFSVSEEITRQQAAGALERNIQLESKGLASRGDRSIPGLNEQCVLVDHRERNTDTLGLQVGKRVCSSFKSEKVVVEDTVPIIPKEKHAQEEDSSIDYDLSPTDTVAHEDYVTTRL.

Topologically, residues 1 to 324 (MAQFYYKRNV…YDEFPGWRRR (324 aa)) are cytoplasmic. 4 ANK repeats span residues 29–60 (LSPS…IYFK), 71–93 (RTAL…LSFN), 96–118 (VGDA…LLNH), and 141–165 (PDIT…VQKG). Residues His172, Cys176, Cys178, and Cys181 each contribute to the Zn(2+) site. Residues 223–260 (LSWELQELSKVENEFKSEYEELSRQCKQFAKDLLDQTR) adopt a coiled-coil conformation. Residues 325–359 (HWAVKMVTCFIIGLLFPVFSVCYLIAPKSPLGLFI) constitute an intramembrane region (discontinuously helical). Topologically, residues 360–362 (RKP) are cytoplasmic. The helical transmembrane segment at 363–383 (FIKFICHTASYLTFLFLLLLA) threads the bilayer. At 384 to 403 (SQHIDRSDLNRQGPPPTIVE) the chain is on the extracellular side. A helical transmembrane segment spans residues 404 to 418 (WMILPWVLGFIWGEI). 4 residues coordinate Ca(2+): Glu417, Gln420, Asn435, and Asp438. Residues 419-432 (KQMWDGGLQDYIHD) are Cytoplasmic-facing. The helical transmembrane segment at 433 to 453 (WWNLMDFVMNSLYLATISLKI) threads the bilayer. At 454 to 475 (VAFVKYSALNPRESWDMWHPTL) the chain is on the extracellular side. The chain crosses the membrane as a helical span at residues 476–498 (VAEALFAIANIFSSLRLISLFTA). Topologically, residues 499-511 (NSHLGPLQISLGR) are cytoplasmic. The chain crosses the membrane as a helical span at residues 512-534 (MLLDILKFLFIYCLVLLAFANGL). Residues 535–599 (NQLYFYYEET…HEFTDFVGAT (65 aa)) are Extracellular-facing. Residues Cys549 and Cys554 are joined by a disulfide bond. Residues 600 to 620 (MFGTYNVISLVVLLNMLIAMM) traverse the membrane as a helical segment. Residues 615–977 (MLIAMMNNSY…AHEDYVTTRL (363 aa)) are interaction with ITPR1, ITPR2 and ITPR3. At 621–977 (NNSYQLIADH…AHEDYVTTRL (357 aa)) the chain is on the cytoplasmic side. The interval 767 to 790 (AASSASSADSDEKSHSEGNGKDKR) is disordered. Over residues 776 to 787 (SDEKSHSEGNGK) the composition is skewed to basic and acidic residues. 2 positions are modified to phosphotyrosine; by FYN: Tyr959 and Tyr972. The segment at 975–977 (TRL) is PDZ-binding domain.

The protein belongs to the transient receptor (TC 1.A.4) family. STrpC subfamily. TRPC4 sub-subfamily. In terms of assembly, homotetramer. Heterotetramer with TRPC1 and/or TRPC5. Forms a heteromeric ion channel with TRPC1, with a 1:3 TRPC1:TRPC4 stoichiometry. Interacts with TRPC4AP. Isoform alpha but not isoform beta interacts with ITPR1, ITPR2 and ITPR3. Interacts with NHERF1. Interacts with MX1 and RNF24. Interacts (via CIRB domain) with SESTD1 (via the spectrin 1 repeat) and SPTBN5 (via C-terminus). Interacts with CDH5 and CTNNB1. Interacts (via protein 4.1-binding domain) with EPB41L2. Interacts with PLSCR1.

The protein localises to the cell membrane. The catalysed reaction is Ca(2+)(in) = Ca(2+)(out). The enzyme catalyses Na(+)(in) = Na(+)(out). It carries out the reaction Li(+)(in) = Li(+)(out). It catalyses the reaction Cs(+)(in) = Cs(+)(out). With respect to regulation, may be operated by a phosphatidylinositol second messenger system activated by receptor tyrosine kinases or G-protein coupled receptors. May be activated by intracellular calcium store depletion. Its function is as follows. Forms a receptor-activated non-selective calcium permeant cation channel. Acts as a cell-cell contact-dependent endothelial calcium entry channel. Forms a homomeric ion channel or a heteromeric ion channel with TRPC1; the heteromeric ion channel has reduced calcium permeability compared to the homomeric channel. Also permeable to monovalent ions including sodium, lithium and cesium ions. Functionally, forms a non-selective a receptor-activated calcium permeant cation channel. Probably is operated by a phosphatidylinositol second messenger system activated by receptor tyrosine kinases or G-protein coupled receptors. The sequence is that of Short transient receptor potential channel 4 (Trpc4) from Rattus norvegicus (Rat).